Consider the following 141-residue polypeptide: Putative nickel-responsive regulator (141 aa).

Ni(2+)-binding residues include histidine 80, histidine 91, histidine 93, and cysteine 99.

It belongs to the transcriptional regulatory CopG/NikR family. Ni(2+) is required as a cofactor.

Transcriptional regulator. The sequence is that of Putative nickel-responsive regulator from Methanococcus aeolicus (strain ATCC BAA-1280 / DSM 17508 / OCM 812 / Nankai-3).